We begin with the raw amino-acid sequence, 420 residues long: MAPQPLRGLVPFLLWCLSLFLSLPGPVWLQPSPPPHSAPRAEPHPCHTCRALVDSFNKGLERTIRDNFGGGNTAWEEEKLSKYKDSETRLVEVLEGVCSKSDFECHRLLELSEELVEAWWFHRQQEAPDLFQWLCSDSLKLCCPSGTFGPSCLPCPGGTERPCGGYGQCEGEGTRGGSGHCDCQAGYGGEACGQCGLGYFEAERNSSHLVCSACFGPCARCTGPEESHCLQCRKGWALHHLKCVDIDECGTEQATCGAAQFCVNTEGSYECRDCAKACLGCMGAGPGRCKKCSRGYQQVGSKCLDVDECETVVCPGENEQCENTEGSYRCVCAEGFRQEDGICVKEQIPESAGFFAEMTEDEMVVLQQMFFGVIICALATLAAKGDLVFTAIFIGAVAAMTGYWLSERSDRVLEGFIKGR.

Residues M1 to L29 form the signal peptide. Residues Q30–E362 are Extracellular-facing. The short motif at C46–C49 is the CXXC element. 4 disulfides stabilise this stretch: C46–C49, C155–C169, C163–C181, and C183–C192. Residues L153–G193 enclose the EGF-like 1 domain. N-linked (GlcNAc...) asparagine glycosylation occurs at N205. FU repeat units lie at residues H208–T255 and S268–P315. A CXXC motif is present at residues C278–C281. 4 cysteine pairs are disulfide-bonded: C278/C281, C309/C321, C314/C330, and C332/C343. The region spanning D305–I342 is the EGF-like 2; calcium-binding domain. The helical transmembrane segment at M363–A383 threads the bilayer. K384 is a topological domain (cytoplasmic). The chain crosses the membrane as a helical span at residues G385–L405. Topologically, residues S406–R420 are extracellular.

Belongs to the CRELD family.

The protein resides in the membrane. It catalyses the reaction Catalyzes the rearrangement of -S-S- bonds in proteins.. Protein disulfide isomerase. Promotes the localization of acetylcholine receptors (AChRs) to the plasma membrane. This Rattus norvegicus (Rat) protein is Protein disulfide isomerase Creld1 (Creld1).